Reading from the N-terminus, the 142-residue chain is Hemoglobin subunit alpha-1 (142 aa).

The Globin domain occupies 2 to 142 (LLSADDKKHI…VSSVLTSKYR (141 aa)). An O2-binding site is contributed by histidine 59. Position 88 (histidine 88) interacts with heme b.

This sequence belongs to the globin family. Heterotetramer of two alpha chains and two beta chains. As to expression, red blood cells.

Functionally, involved in oxygen transport from the lung to the various peripheral tissues. The protein is Hemoglobin subunit alpha-1 (hba1) of Xenopus borealis (Kenyan clawed frog).